Here is a 382-residue protein sequence, read N- to C-terminus: UDP-4-amino-4-deoxy-L-arabinose--oxoglutarate aminotransferase (382 aa).

Residue Lys183 is modified to N6-(pyridoxal phosphate)lysine.

Belongs to the DegT/DnrJ/EryC1 family. ArnB subfamily. Homodimer. The cofactor is pyridoxal 5'-phosphate.

The enzyme catalyses UDP-4-amino-4-deoxy-beta-L-arabinose + 2-oxoglutarate = UDP-beta-L-threo-pentopyranos-4-ulose + L-glutamate. The protein operates within nucleotide-sugar biosynthesis; UDP-4-deoxy-4-formamido-beta-L-arabinose biosynthesis; UDP-4-deoxy-4-formamido-beta-L-arabinose from UDP-alpha-D-glucuronate: step 2/3. It participates in bacterial outer membrane biogenesis; lipopolysaccharide biosynthesis. In terms of biological role, catalyzes the conversion of UDP-4-keto-arabinose (UDP-Ara4O) to UDP-4-amino-4-deoxy-L-arabinose (UDP-L-Ara4N). The modified arabinose is attached to lipid A and is required for resistance to polymyxin and cationic antimicrobial peptides. The polypeptide is UDP-4-amino-4-deoxy-L-arabinose--oxoglutarate aminotransferase (Pseudomonas aeruginosa (strain ATCC 15692 / DSM 22644 / CIP 104116 / JCM 14847 / LMG 12228 / 1C / PRS 101 / PAO1)).